A 384-amino-acid chain; its full sequence is Putative glutamate--cysteine ligase 2 (384 aa).

Belongs to the glutamate--cysteine ligase type 2 family. YbdK subfamily.

It carries out the reaction L-cysteine + L-glutamate + ATP = gamma-L-glutamyl-L-cysteine + ADP + phosphate + H(+). In terms of biological role, ATP-dependent carboxylate-amine ligase which exhibits weak glutamate--cysteine ligase activity. This Dechloromonas aromatica (strain RCB) protein is Putative glutamate--cysteine ligase 2.